The following is an 88-amino-acid chain: Small ribosomal subunit protein uS15 (88 aa).

Belongs to the universal ribosomal protein uS15 family. As to quaternary structure, part of the 30S ribosomal subunit. Forms a bridge to the 50S subunit in the 70S ribosome, contacting the 23S rRNA.

Its function is as follows. One of the primary rRNA binding proteins, it binds directly to 16S rRNA where it helps nucleate assembly of the platform of the 30S subunit by binding and bridging several RNA helices of the 16S rRNA. In terms of biological role, forms an intersubunit bridge (bridge B4) with the 23S rRNA of the 50S subunit in the ribosome. The protein is Small ribosomal subunit protein uS15 of Geobacter sp. (strain M21).